A 713-amino-acid chain; its full sequence is Pro-neuregulin-3, membrane-bound isoform (713 aa).

The Extracellular portion of the chain corresponds to 1-362; it reads MSEGAAGASP…MESEDVYQRQ (362 aa). 3 disordered regions span residues 28 to 48, 119 to 220, and 251 to 282; these read AAAA…AAEP, SSFP…STQA, and AAAS…TTYS. Positions 34-44 are enriched in gly residues; it reads AGGGPDGGGEG. The span at 127 to 148 shows a compositional bias: low complexity; that stretch reads TTTTTTSTTSPATPSAGGAASS. Residues 149–163 show a composition bias toward polar residues; it reads RTPNRISTRLTTITR. Composition is skewed to low complexity over residues 195–207 and 254–274; these read STTA…STPG and SSSS…STSP. The EGF-like domain maps to 288-331; the sequence is HFKPCRDKDLAYCLNDGECFVIETLTGSHKHCRCKEGYQGVRCD. 3 cysteine pairs are disulfide-bonded: Cys292–Cys306, Cys300–Cys319, and Cys321–Cys330. Residues 363–383 traverse the membrane as a helical segment; the sequence is VLSISCIIFGIVIVGMFCAAF. At 384–713 the chain is on the cytoplasmic side; the sequence is YFKSKKQAKQ…EIQRDSVLTK (330 aa). The segment at 449–496 is disordered; the sequence is SAPQSFPEVTSPDRGSQPIKHHSPGQRSGMLHRNTFRRAPPSPRSRLG.

The protein belongs to the neuregulin family. In terms of assembly, interacts with ERBB4. Post-translationally, proteolytic cleavage close to the plasma membrane on the external face leads to the release of the soluble growth factor form. In terms of processing, extensive glycosylation precedes the proteolytic cleavage. In terms of tissue distribution, expressed in sympathetic, motor, and sensory neurons.

It is found in the cell membrane. The protein localises to the secreted. Its function is as follows. Direct ligand for the ERBB4 tyrosine kinase receptor. Binding results in ligand-stimulated tyrosine phosphorylation and activation of the receptor. Does not bind to the EGF receptor, ERBB2 or ERBB3 receptors. This Mus musculus (Mouse) protein is Pro-neuregulin-3, membrane-bound isoform (Nrg3).